The chain runs to 135 residues: Hydroxylaminobenzene mutase HabA (135 aa).

4 helical membrane-spanning segments follow: residues 5–25 (LFAS…LVPV), 33–55 (VAGH…LWPY), 67–87 (FWLL…AALW), and 113–133 (FLLF…LIGI).

The protein resides in the cell membrane. The catalysed reaction is N-phenylhydroxylamine = 2-aminophenol. Functionally, catalyzes the rearrangement of hydroxylaminobenzene to 2-aminophenol. Involved in the degradation of nitrobenzene. This Ectopseudomonas oleovorans (Pseudomonas oleovorans) protein is Hydroxylaminobenzene mutase HabA (habA).